A 312-amino-acid chain; its full sequence is CD-NTase-associated protein 12 (312 aa).

Residues 5-127 (RLFIGSSSEE…FNGLTLARFD (123 aa)) form the TIR domain.

This sequence in the C-terminal section; belongs to the bacterial STING family. As to quaternary structure, forms homodimers; in the presence of c-di-GMP forms filaments with an ordered array of parallel-stacked subunits.

The enzyme catalyses NAD(+) + H2O = ADP-D-ribose + nicotinamide + H(+). NAD(+) hydrolase activity is strongly stimulated by c-di-GMP, weakly by 3'3'-cGAMP, very weakly by c-di-AMP but not at all by 2'3'-cGAMP. Self-association of TIR domains is required for NADase activity. Effector protein of a CBASS antiviral system with NAD(+) hydrolase activity. CBASS (cyclic oligonucleotide-based antiphage signaling system) provides immunity against bacteriophage. The CD-NTase protein synthesizes cyclic nucleotides in response to infection; these serve as specific second messenger signals. The signals activate a diverse range of effectors, leading to bacterial cell death and thus abortive phage infection. A type I-D CBASS(GG) system. Its function is as follows. Binds c-di-GMP, does not bind cUMP-AMP. Upon activation by c-di-GMP forms filaments which hydrolyze NAD(+); filament formation is required for enzyme activation. The protein is CD-NTase-associated protein 12 of Niabella drilacis (strain DSM 25811 / CCM 8410 / CCUG 62505 / LMG 26954 / E90).